A 502-amino-acid polypeptide reads, in one-letter code: ATP synthase subunit alpha (502 aa).

Residue 169–176 coordinates ATP; the sequence is GDRQTGKT.

This sequence belongs to the ATPase alpha/beta chains family. F-type ATPases have 2 components, CF(1) - the catalytic core - and CF(0) - the membrane proton channel. CF(1) has five subunits: alpha(3), beta(3), gamma(1), delta(1), epsilon(1). CF(0) has three main subunits: a(1), b(2) and c(9-12). The alpha and beta chains form an alternating ring which encloses part of the gamma chain. CF(1) is attached to CF(0) by a central stalk formed by the gamma and epsilon chains, while a peripheral stalk is formed by the delta and b chains.

The protein resides in the cell inner membrane. The catalysed reaction is ATP + H2O + 4 H(+)(in) = ADP + phosphate + 5 H(+)(out). Functionally, produces ATP from ADP in the presence of a proton gradient across the membrane. The alpha chain is a regulatory subunit. This is ATP synthase subunit alpha from Kosmotoga olearia (strain ATCC BAA-1733 / DSM 21960 / TBF 19.5.1).